The following is a 156-amino-acid chain: Small ribosomal subunit protein uS7 (156 aa).

It belongs to the universal ribosomal protein uS7 family. Part of the 30S ribosomal subunit. Contacts proteins S9 and S11.

One of the primary rRNA binding proteins, it binds directly to 16S rRNA where it nucleates assembly of the head domain of the 30S subunit. Is located at the subunit interface close to the decoding center, probably blocks exit of the E-site tRNA. This chain is Small ribosomal subunit protein uS7, found in Bacillus mycoides (strain KBAB4) (Bacillus weihenstephanensis).